Reading from the N-terminus, the 327-residue chain is GMP reductase (327 aa).

C175 serves as the catalytic Thioimidate intermediate. NADP(+) is bound at residue 204-227 (IIADGGIRTPGDIAKSIRFGATMV).

This sequence belongs to the IMPDH/GMPR family. GuaC type 2 subfamily.

It catalyses the reaction IMP + NH4(+) + NADP(+) = GMP + NADPH + 2 H(+). Functionally, catalyzes the irreversible NADPH-dependent deamination of GMP to IMP. It functions in the conversion of nucleobase, nucleoside and nucleotide derivatives of G to A nucleotides, and in maintaining the intracellular balance of A and G nucleotides. This chain is GMP reductase, found in Clostridium acetobutylicum (strain ATCC 824 / DSM 792 / JCM 1419 / IAM 19013 / LMG 5710 / NBRC 13948 / NRRL B-527 / VKM B-1787 / 2291 / W).